We begin with the raw amino-acid sequence, 663 residues long: ATP-dependent zinc metalloprotease FtsH (663 aa).

Residues 1 to 12 lie on the Stromal side of the membrane; the sequence is MNKKETNTSWWR. A helical membrane pass occupies residues 13–33; it reads IILISLGISIICILAAFLAMK. At 34 to 135 the chain is on the lumenal side; the sequence is DGFFVLENNT…HPPKLDIFKT (102 aa). The chain crosses the membrane as a helical span at residues 136-156; sequence ISDTLGSLIVPGLVVAVFYLF. The Stromal segment spans residues 157 to 663; the sequence is LERANNNNNN…KIYESKFPKK (507 aa). A disordered region spans residues 165 to 184; that stretch reads NNNSNGSPFGPGGGPNQNMR. 244-251 is an ATP binding site; sequence GPPGTGKT. His-465 is a Zn(2+) binding site. Glu-466 is a catalytic residue. Zn(2+) is bound by residues His-469 and Asp-543.

The protein in the central section; belongs to the AAA ATPase family. In the C-terminal section; belongs to the peptidase M41 family. Homohexamer. Zn(2+) serves as cofactor.

The protein localises to the plastid. It is found in the chloroplast thylakoid membrane. Acts as a processive, ATP-dependent zinc metallopeptidase. The chain is ATP-dependent zinc metalloprotease FtsH from Heterosigma akashiwo (strain NIES-293 / 8280G21-1).